A 259-amino-acid polypeptide reads, in one-letter code: Small ribosomal subunit protein uS2 (259 aa).

It belongs to the universal ribosomal protein uS2 family.

The sequence is that of Small ribosomal subunit protein uS2 from Dinoroseobacter shibae (strain DSM 16493 / NCIMB 14021 / DFL 12).